A 351-amino-acid chain; its full sequence is UDP-3-O-acylglucosamine N-acyltransferase (351 aa).

H240 functions as the Proton acceptor in the catalytic mechanism.

Belongs to the transferase hexapeptide repeat family. LpxD subfamily. Homotrimer.

The catalysed reaction is a UDP-3-O-[(3R)-3-hydroxyacyl]-alpha-D-glucosamine + a (3R)-hydroxyacyl-[ACP] = a UDP-2-N,3-O-bis[(3R)-3-hydroxyacyl]-alpha-D-glucosamine + holo-[ACP] + H(+). The protein operates within bacterial outer membrane biogenesis; LPS lipid A biosynthesis. Catalyzes the N-acylation of UDP-3-O-acylglucosamine using 3-hydroxyacyl-ACP as the acyl donor. Is involved in the biosynthesis of lipid A, a phosphorylated glycolipid that anchors the lipopolysaccharide to the outer membrane of the cell. This chain is UDP-3-O-acylglucosamine N-acyltransferase, found in Pseudomonas putida (strain ATCC 47054 / DSM 6125 / CFBP 8728 / NCIMB 11950 / KT2440).